The chain runs to 285 residues: NADPH-dependent 7-cyano-7-deazaguanine reductase (285 aa).

Residue 80–82 (VES) participates in substrate binding. 82–83 (SK) is an NADPH binding site. Residue C191 is the Thioimide intermediate of the active site. Catalysis depends on D198, which acts as the Proton donor. Position 231-232 (231-232 (HE)) interacts with substrate. 260-261 (RG) contacts NADPH.

It belongs to the GTP cyclohydrolase I family. QueF type 2 subfamily. Homodimer.

It is found in the cytoplasm. It carries out the reaction 7-aminomethyl-7-carbaguanine + 2 NADP(+) = 7-cyano-7-deazaguanine + 2 NADPH + 3 H(+). Its pathway is tRNA modification; tRNA-queuosine biosynthesis. Catalyzes the NADPH-dependent reduction of 7-cyano-7-deazaguanine (preQ0) to 7-aminomethyl-7-deazaguanine (preQ1). The chain is NADPH-dependent 7-cyano-7-deazaguanine reductase from Psychrobacter cryohalolentis (strain ATCC BAA-1226 / DSM 17306 / VKM B-2378 / K5).